The sequence spans 261 residues: Indole-3-glycerol phosphate synthase (261 aa).

This sequence belongs to the TrpC family.

It catalyses the reaction 1-(2-carboxyphenylamino)-1-deoxy-D-ribulose 5-phosphate + H(+) = (1S,2R)-1-C-(indol-3-yl)glycerol 3-phosphate + CO2 + H2O. The protein operates within amino-acid biosynthesis; L-tryptophan biosynthesis; L-tryptophan from chorismate: step 4/5. The sequence is that of Indole-3-glycerol phosphate synthase from Burkholderia mallei (strain NCTC 10247).